Consider the following 118-residue polypeptide: MARIAGINIPEHKHALIALTSIYGIGKKRSKIICFNANIAENSKISDLKEEEIELLRENVAKYVTEGDLRREKTLNIKRLIDLNCYRGLRHRRSLPVRGQRTKTNARTCKGPRKAIKK.

Positions 97 to 118 are disordered; the sequence is VRGQRTKTNARTCKGPRKAIKK.

The protein belongs to the universal ribosomal protein uS13 family. In terms of assembly, part of the 30S ribosomal subunit. Forms a loose heterodimer with protein S19. Forms two bridges to the 50S subunit in the 70S ribosome.

Located at the top of the head of the 30S subunit, it contacts several helices of the 16S rRNA. In the 70S ribosome it contacts the 23S rRNA (bridge B1a) and protein L5 of the 50S subunit (bridge B1b), connecting the 2 subunits; these bridges are implicated in subunit movement. Contacts the tRNAs in the A and P-sites. The protein is Small ribosomal subunit protein uS13 of Buchnera aphidicola subsp. Schizaphis graminum (strain Sg).